The chain runs to 312 residues: Phosphoribosylglycinamide formyltransferase, chloroplastic (312 aa).

A chloroplast-targeting transit peptide spans 1-73; that stretch reads MEAQQIISRF…EVCSSSWRIW (73 aa). 109-111 contacts N(1)-(5-phospho-beta-D-ribosyl)glycinamide; the sequence is GSN. Residues Lys162, 187-190, and Asn204 contribute to the (6R)-10-formyltetrahydrofolate site; that span reads LKLI. Catalysis depends on His206, which acts as the Proton donor. Asp247 provides a ligand contact to (6R)-10-formyltetrahydrofolate. Glu276 contributes to the N(1)-(5-phospho-beta-D-ribosyl)glycinamide binding site.

This sequence belongs to the GART family.

The protein resides in the plastid. The protein localises to the chloroplast. The catalysed reaction is N(1)-(5-phospho-beta-D-ribosyl)glycinamide + (6R)-10-formyltetrahydrofolate = N(2)-formyl-N(1)-(5-phospho-beta-D-ribosyl)glycinamide + (6S)-5,6,7,8-tetrahydrofolate + H(+). The protein operates within purine metabolism; IMP biosynthesis via de novo pathway; N(2)-formyl-N(1)-(5-phospho-D-ribosyl)glycinamide from N(1)-(5-phospho-D-ribosyl)glycinamide (10-formyl THF route): step 1/1. The protein is Phosphoribosylglycinamide formyltransferase, chloroplastic (PUR3) of Vigna unguiculata (Cowpea).